The sequence spans 813 residues: Leucine--tRNA ligase (813 aa).

The 'HIGH' region motif lies at 41-51 (PYPSGTLHMGH). Positions 575 to 579 (KMSKS) match the 'KMSKS' region motif. ATP is bound at residue K578.

Belongs to the class-I aminoacyl-tRNA synthetase family.

The protein localises to the cytoplasm. The catalysed reaction is tRNA(Leu) + L-leucine + ATP = L-leucyl-tRNA(Leu) + AMP + diphosphate. The protein is Leucine--tRNA ligase of Francisella tularensis subsp. holarctica (strain FTNF002-00 / FTA).